The chain runs to 256 residues: tRNA (guanine-N(1)-)-methyltransferase (256 aa).

S-adenosyl-L-methionine is bound by residues glycine 113 and 132–137 (VGDYVL).

This sequence belongs to the RNA methyltransferase TrmD family. Homodimer.

It is found in the cytoplasm. It catalyses the reaction guanosine(37) in tRNA + S-adenosyl-L-methionine = N(1)-methylguanosine(37) in tRNA + S-adenosyl-L-homocysteine + H(+). In terms of biological role, specifically methylates guanosine-37 in various tRNAs. The protein is tRNA (guanine-N(1)-)-methyltransferase of Coprothermobacter proteolyticus (strain ATCC 35245 / DSM 5265 / OCM 4 / BT).